A 384-amino-acid polypeptide reads, in one-letter code: Lipid-A-disaccharide synthase (384 aa).

Belongs to the LpxB family.

The catalysed reaction is a lipid X + a UDP-2-N,3-O-bis[(3R)-3-hydroxyacyl]-alpha-D-glucosamine = a lipid A disaccharide + UDP + H(+). Its pathway is bacterial outer membrane biogenesis; LPS lipid A biosynthesis. Functionally, condensation of UDP-2,3-diacylglucosamine and 2,3-diacylglucosamine-1-phosphate to form lipid A disaccharide, a precursor of lipid A, a phosphorylated glycolipid that anchors the lipopolysaccharide to the outer membrane of the cell. This chain is Lipid-A-disaccharide synthase, found in Neisseria meningitidis serogroup C / serotype 2a (strain ATCC 700532 / DSM 15464 / FAM18).